Here is a 284-residue protein sequence, read N- to C-terminus: MNNMDYDPRSMGSYGPNYNNFNPNFGKIRRHKNTSYPGYNGFDPSDGPMNGPMGGPMGGPMNGPMNGQMGGPMNGSMNGPMNGPMNGPMNGQMGGPMNGPMGGPINGPMNGPRGRQMNGPNNGPMGGPMNGPMNGPNNNQFNGPMNGPNEYYSPEDSDGSDYSDSNPNEFDSDDDDIDLSYFQKRQYDKPTYHKFEVTDEYLADYLLRKFGLDKDKVVRSIQKNKKDEFKAMILNYFYKENPKIKHQSINNQYKLFRKWNKSGLKIKIDDLETYYENKVKPHMH.

2 stretches are compositionally biased toward low complexity: residues N110 to G123 and N130 to N149. The disordered stretch occupies residues N110 to D176.

It localises to the virion. This is an uncharacterized protein from Acanthamoeba polyphaga mimivirus (APMV).